We begin with the raw amino-acid sequence, 419 residues long: Acyl-[acyl-carrier-protein] desaturase 6, chloroplastic (419 aa).

The N-terminal 54 residues, 1–54 (MAATATMAMPLANRLRCKPNTNSSSPSRTLFGRRVTMISSSRWGSAVSGSAIMS), are a transit peptide targeting the chloroplast. Residues Glu151, Glu189, His192, Glu242, Glu277, and His280 each coordinate Fe cation.

Belongs to the fatty acid desaturase type 2 family. As to quaternary structure, homodimer. It depends on Fe(2+) as a cofactor.

It is found in the plastid. The protein resides in the chloroplast. Its pathway is lipid metabolism; fatty acid metabolism. In terms of biological role, introduces a cis double bond in the acyl chain of an acyl-[acyl-carrier protein]. The polypeptide is Acyl-[acyl-carrier-protein] desaturase 6, chloroplastic (Oryza sativa subsp. japonica (Rice)).